Consider the following 143-residue polypeptide: Nucleoside diphosphate kinase (143 aa).

6 residues coordinate ATP: lysine 11, phenylalanine 59, arginine 87, threonine 93, arginine 104, and asparagine 114. The Pros-phosphohistidine intermediate role is filled by histidine 117.

The protein belongs to the NDK family. In terms of assembly, homotetramer. It depends on Mg(2+) as a cofactor.

It localises to the cytoplasm. The catalysed reaction is a 2'-deoxyribonucleoside 5'-diphosphate + ATP = a 2'-deoxyribonucleoside 5'-triphosphate + ADP. It catalyses the reaction a ribonucleoside 5'-diphosphate + ATP = a ribonucleoside 5'-triphosphate + ADP. Its function is as follows. Major role in the synthesis of nucleoside triphosphates other than ATP. The ATP gamma phosphate is transferred to the NDP beta phosphate via a ping-pong mechanism, using a phosphorylated active-site intermediate. The sequence is that of Nucleoside diphosphate kinase from Pseudoalteromonas translucida (strain TAC 125).